Consider the following 475-residue polypeptide: MKYEAVIGLEVHAELLTESKIFCSCTTKFGGEPNTHVCPVCLGLPGTLPVLNKKVVEYAVRAGLALNCTIANFSKMDRKNYFYPDLPKAYQISQYDLPLCSNGYVEIEVDGKVKKIGIKRIHIEEDAGKLLHENTDGSLVDYNRAGVPLIEIVSEPDMSTPEEAYQYLTKLKSILEYTEVSDCKMQEGSLRVDTNVSVRPVGSTELGTKIELKNLNSFRAVQKALEYEIKRQIKVLEEGGTIVQETRRWNEAKGITEPMRTKEEAHDYRYFPEPDLVPIIVTDEWKEEIRKSLPEMPHRKRERFISEYGLPEYDAKIITSSKKIADFFEKCALEYDSPKAVSNWLMGEFSRLMNETGKEIDEVPVTPQMLVKLLKLIDNGVISGSIAKTVFEEMFGTGKEPEVIVEEKGLKQIANEDELREIIKKVIAENPKSVEDYKNGKEKAMGFLVGQVMKATKGKANPQLTNQILKEELSK.

The protein belongs to the GatB/GatE family. GatB subfamily. As to quaternary structure, heterotrimer of A, B and C subunits.

It catalyses the reaction L-glutamyl-tRNA(Gln) + L-glutamine + ATP + H2O = L-glutaminyl-tRNA(Gln) + L-glutamate + ADP + phosphate + H(+). The catalysed reaction is L-aspartyl-tRNA(Asn) + L-glutamine + ATP + H2O = L-asparaginyl-tRNA(Asn) + L-glutamate + ADP + phosphate + 2 H(+). Allows the formation of correctly charged Asn-tRNA(Asn) or Gln-tRNA(Gln) through the transamidation of misacylated Asp-tRNA(Asn) or Glu-tRNA(Gln) in organisms which lack either or both of asparaginyl-tRNA or glutaminyl-tRNA synthetases. The reaction takes place in the presence of glutamine and ATP through an activated phospho-Asp-tRNA(Asn) or phospho-Glu-tRNA(Gln). The chain is Aspartyl/glutamyl-tRNA(Asn/Gln) amidotransferase subunit B from Thermoanaerobacter pseudethanolicus (strain ATCC 33223 / 39E) (Clostridium thermohydrosulfuricum).